We begin with the raw amino-acid sequence, 101 residues long: NAD(P)H-quinone oxidoreductase subunit 4L, chloroplastic (101 aa).

The next 3 membrane-spanning stretches (helical) occupy residues 2–22 (ILEH…YGLI), 32–52 (MCLE…SDFF), and 61–81 (IFCI…LAIV).

This sequence belongs to the complex I subunit 4L family. As to quaternary structure, NDH is composed of at least 16 different subunits, 5 of which are encoded in the nucleus.

Its subcellular location is the plastid. The protein localises to the chloroplast thylakoid membrane. The catalysed reaction is a plastoquinone + NADH + (n+1) H(+)(in) = a plastoquinol + NAD(+) + n H(+)(out). It catalyses the reaction a plastoquinone + NADPH + (n+1) H(+)(in) = a plastoquinol + NADP(+) + n H(+)(out). Its function is as follows. NDH shuttles electrons from NAD(P)H:plastoquinone, via FMN and iron-sulfur (Fe-S) centers, to quinones in the photosynthetic chain and possibly in a chloroplast respiratory chain. The immediate electron acceptor for the enzyme in this species is believed to be plastoquinone. Couples the redox reaction to proton translocation, and thus conserves the redox energy in a proton gradient. This chain is NAD(P)H-quinone oxidoreductase subunit 4L, chloroplastic, found in Arabis hirsuta (Hairy rock-cress).